We begin with the raw amino-acid sequence, 185 residues long: Lipid A acyltransferase PagP (185 aa).

Residues 1-24 (MKTHNDILAALAALPLFLTGAAFA) form the signal peptide. Catalysis depends on residues H57, D100, and S101.

Belongs to the lipid A palmitoyltransferase family. In terms of assembly, homodimer.

Its subcellular location is the cell outer membrane. The catalysed reaction is a lipid A + a 1,2-diacyl-sn-glycero-3-phosphocholine = a hepta-acyl lipid A + a 2-acyl-sn-glycero-3-phosphocholine. It catalyses the reaction a lipid IVA + a 1,2-diacyl-sn-glycero-3-phosphocholine = a lipid IVB + a 2-acyl-sn-glycero-3-phosphocholine. The enzyme catalyses a lipid IIA + a 1,2-diacyl-sn-glycero-3-phosphocholine = a lipid IIB + a 2-acyl-sn-glycero-3-phosphocholine. Transfers a fatty acid residue from the sn-1 position of a phospholipid to the N-linked hydroxyfatty acid chain on the proximal unit of lipid A or its precursors. The protein is Lipid A acyltransferase PagP of Edwardsiella tarda (strain FL6-60).